Here is a 30-residue protein sequence, read N- to C-terminus: Trypsin inhibitor 4 (30 aa).

3 disulfide bridges follow: cysteine 3-cysteine 20, cysteine 10-cysteine 22, and cysteine 16-cysteine 29.

It belongs to the protease inhibitor I7 (squash-type serine protease inhibitor) family.

The protein resides in the secreted. Functionally, inhibits trypsin. The chain is Trypsin inhibitor 4 from Cucumis sativus (Cucumber).